The chain runs to 658 residues: Glycogen debranching enzyme (658 aa).

Catalysis depends on Asp336, which acts as the Nucleophile. Residue Glu371 is the Proton donor of the active site.

The protein belongs to the glycosyl hydrolase 13 family.

The catalysed reaction is Hydrolysis of (1-&gt;6)-alpha-D-glucosidic linkages to branches with degrees of polymerization of three or four glucose residues in limit dextrin.. It participates in glycan degradation; glycogen degradation. Removes maltotriose and maltotetraose chains that are attached by 1,6-alpha-linkage to the limit dextrin main chain, generating a debranched limit dextrin. The polypeptide is Glycogen debranching enzyme (Klebsiella pneumoniae (strain 342)).